Consider the following 193-residue polypeptide: Cytidylate kinase (193 aa).

Position 12-20 (Gly-12–Thr-20) interacts with ATP.

It belongs to the cytidylate kinase family. Type 2 subfamily.

It is found in the cytoplasm. It carries out the reaction CMP + ATP = CDP + ADP. The enzyme catalyses dCMP + ATP = dCDP + ADP. This Thermococcus sibiricus (strain DSM 12597 / MM 739) protein is Cytidylate kinase.